Reading from the N-terminus, the 78-residue chain is Major outer membrane lipoprotein Lpp (78 aa).

Residues 1 to 20 form the signal peptide; it reads MNRTKLVLGAVILGSTLLAG. Cys21 carries the N-palmitoyl cysteine lipid modification. Cys21 is lipidated: S-diacylglycerol cysteine. Positions 22-75 form a coiled coil; the sequence is SSNAKIDQLSTDVQTLNAKVDQLSNDVTAIRSDVQAAKDDAARANQRLDNQAHS. Repeats lie at residues 24-34 and 38-48; these read NAKIDQLSTDV and NAKVDQLSNDV. An N6-murein peptidoglycan lysine modification is found at Lys78.

Belongs to the Lpp family. As to quaternary structure, homotrimer.

Its subcellular location is the cell outer membrane. It is found in the secreted. It localises to the cell wall. In terms of biological role, a highly abundant outer membrane lipoprotein that controls the distance between the inner and outer membranes. The only protein known to be covalently linked to the peptidoglycan network (PGN). Also non-covalently binds the PGN. The link between the cell outer membrane and PGN contributes to maintenance of the structural and functional integrity of the cell envelope, and maintains the correct distance between the PGN and the outer membrane. The sequence is that of Major outer membrane lipoprotein Lpp from Erwinia amylovora (Fire blight bacteria).